Here is a 66-residue protein sequence, read N- to C-terminus: Large ribosomal subunit protein bL33c (66 aa).

This sequence belongs to the bacterial ribosomal protein bL33 family.

The protein localises to the plastid. Its subcellular location is the chloroplast. The sequence is that of Large ribosomal subunit protein bL33c from Ceratophyllum demersum (Rigid hornwort).